Here is a 204-residue protein sequence, read N- to C-terminus: MKVKICGITDMETAKRACEYGADALGFVFAESKRKITPGLAKEIIQELPANVLKIGVFVNESVEVIQKITENCGLTHVQLHGGEDNHQIRRLNIPSIKSLGVTSESDMKNAQGYETDYILFDSPKEKFHGGNGKAFPWELLAHMPKELREKTILAGGLNTLNIEEAIRTVRPYMVDVSSGVETEGKKDVEKIKQFIIKAKECSK.

It belongs to the TrpF family.

The catalysed reaction is N-(5-phospho-beta-D-ribosyl)anthranilate = 1-(2-carboxyphenylamino)-1-deoxy-D-ribulose 5-phosphate. The protein operates within amino-acid biosynthesis; L-tryptophan biosynthesis; L-tryptophan from chorismate: step 3/5. The chain is N-(5'-phosphoribosyl)anthranilate isomerase from Bacillus cereus (strain AH820).